The following is a 305-amino-acid chain: Autophagy-related protein 14 (305 aa).

Residues 34–147 adopt a coiled-coil conformation; it reads KMNLLILRQE…LDTLSHILAR (114 aa).

The protein belongs to the ATG14 family. In terms of assembly, component of the autophagy-specific VPS34 PI3-kinase complex I.

It localises to the preautophagosomal structure membrane. It is found in the vacuole membrane. Functionally, required for cytoplasm to vacuole transport (Cvt) and autophagy as a part of the autophagy-specific VPS34 PI3-kinase complex I. This complex is essential to recruit the ATG8-phosphatidylinositol conjugate and the ATG12-ATG5 conjugate to the pre-autophagosomal structure. ATG14 mediates the specific binding of the VPS34 PI3-kinase complex I to the preautophagosomal structure (PAS). This chain is Autophagy-related protein 14, found in Kluyveromyces marxianus (strain DMKU3-1042 / BCC 29191 / NBRC 104275) (Yeast).